The primary structure comprises 618 residues: Probable Xaa-Pro aminopeptidase P (618 aa).

4 residues coordinate Mn(2+): Asp-414, Asp-425, Glu-523, and Glu-537.

Belongs to the peptidase M24B family. Mn(2+) is required as a cofactor.

The catalysed reaction is Release of any N-terminal amino acid, including proline, that is linked to proline, even from a dipeptide or tripeptide.. Its function is as follows. Catalyzes the removal of a penultimate prolyl residue from the N-termini of peptides. The polypeptide is Probable Xaa-Pro aminopeptidase P (AMPP) (Metarhizium acridum (strain CQMa 102)).